Consider the following 310-residue polypeptide: Beta-carotene 3-hydroxylase 1, chloroplastic (310 aa).

The N-terminal 51 residues, 1-51 (MAAGLSTAVTFKPLHRSFSSSSTDFRLRLPKSLSGFSPSLRFKRFSVCYVV), are a transit peptide targeting the chloroplast. A run of 2 helical transmembrane segments spans residues 98–118 (YLIAAMLSSFGITSMAVMAVY) and 132–152 (MLEMFGTFALSVGAAVGMEFW). Positions 145-272 (AAVGMEFWAR…KFNGVPYGLF (128 aa)) constitute a Fatty acid hydroxylase domain. Positions 157-162 (HRALWH) match the Histidine box-1 motif. The Histidine box-2 motif lies at 169–173 (HESHH). 2 helical membrane-spanning segments follow: residues 183-203 (NDVFAIVNAGPAIGLLSYGFF) and 208-228 (VPGLCFGAGLGITVFGIAYMF). Positions 230–235 (HDGLVH) match the Histidine box-3 motif. The short motif at 256–260 (HQLHH) is the Histidine box-4 element.

The protein belongs to the sterol desaturase family. Homodimer. As to expression, expressed in leaves, flowers, stems, roots and siliques.

It is found in the plastid. Its subcellular location is the chloroplast membrane. It catalyses the reaction all-trans-beta-carotene + 4 reduced [2Fe-2S]-[ferredoxin] + 2 O2 + 4 H(+) = all-trans-zeaxanthin + 4 oxidized [2Fe-2S]-[ferredoxin] + 2 H2O. Nonheme diiron monooxygenase involved in the biosynthesis of xanthophylls. Specific for beta-ring hydroxylations of beta-carotene. Also has a low activity toward the beta- and epsilon-rings of alpha-carotene. No activity with acyclic carotenoids such as lycopene and neurosporene. Uses ferredoxin as an electron donor. The sequence is that of Beta-carotene 3-hydroxylase 1, chloroplastic (BETA-OHASE 1) from Arabidopsis thaliana (Mouse-ear cress).